The sequence spans 60 residues: Large ribosomal subunit protein eL37 (60 aa).

Zn(2+) contacts are provided by Cys-19, Cys-22, Cys-34, and Cys-37. Residues 19 to 37 (CRRCGRISFHAQKKVCSSC) form a C4-type zinc finger.

It belongs to the eukaryotic ribosomal protein eL37 family. Requires Zn(2+) as cofactor.

Its function is as follows. Binds to the 23S rRNA. The protein is Large ribosomal subunit protein eL37 of Methanoregula boonei (strain DSM 21154 / JCM 14090 / 6A8).